Consider the following 325-residue polypeptide: Hydroxymethylglutaryl-CoA lyase, mitochondrial (325 aa).

The N-terminal 27 residues, 1–27 (MASVRKAFPRRLVGLTSLRAVSTSSMG), are a transit peptide targeting the mitochondrion. In terms of domain architecture, Pyruvate carboxyltransferase spans 33 to 300 (VKIVEVGPRD…HTGVNLQKLL (268 aa)). Arg41 provides a ligand contact to substrate. Asp42 is an a divalent metal cation binding site. Position 48 is an N6-acetyllysine; alternate (Lys48). Residue Lys48 is modified to N6-succinyllysine; alternate. Lys111 carries the post-translational modification N6-acetyllysine. Residues Lys137 and Lys179 each carry the N6-acetyllysine; alternate modification. N6-succinyllysine; alternate is present on residues Lys137 and Lys179. A divalent metal cation is bound by residues His233 and His235. Cys266 is an active-site residue. A divalent metal cation is bound at residue Asn275. Residues 323-325 (CKL) carry the Microbody targeting signal motif. Lys324 is subject to N6-acetyllysine.

The protein belongs to the HMG-CoA lyase family. Homodimer; disulfide-linked. Can also form homotetramers.

The protein resides in the mitochondrion matrix. It is found in the peroxisome. It carries out the reaction (3S)-3-hydroxy-3-methylglutaryl-CoA = acetoacetate + acetyl-CoA. Its pathway is metabolic intermediate metabolism; (S)-3-hydroxy-3-methylglutaryl-CoA degradation; acetoacetate from (S)-3-hydroxy-3-methylglutaryl-CoA: step 1/1. In terms of biological role, mitochondrial 3-hydroxy-3-methylglutaryl-CoA lyase that catalyzes a cation-dependent cleavage of (S)-3-hydroxy-3-methylglutaryl-CoA into acetyl-CoA and acetoacetate, a key step in ketogenesis. Terminal step in leucine catabolism. Ketone bodies (beta-hydroxybutyrate, acetoacetate and acetone) are essential as an alternative source of energy to glucose, as lipid precursors and as regulators of metabolism. This chain is Hydroxymethylglutaryl-CoA lyase, mitochondrial (Hmgcl), found in Mus musculus (Mouse).